A 221-amino-acid chain; its full sequence is Transmembrane protein 225B (221 aa).

Transmembrane regions follow at residues 14-34, 77-97, 109-129, and 147-167; these read WAIV…VSIF, VFLL…MPFA, FVLA…LVLH, and VLWP…AGTI.

The protein resides in the membrane. The chain is Transmembrane protein 225B from Homo sapiens (Human).